Consider the following 168-residue polypeptide: Probable chorismate pyruvate-lyase (168 aa).

Residues Arg75, Ile114, and Glu155 each contribute to the substrate site.

Belongs to the UbiC family.

Its subcellular location is the cytoplasm. The catalysed reaction is chorismate = 4-hydroxybenzoate + pyruvate. It functions in the pathway cofactor biosynthesis; ubiquinone biosynthesis. Removes the pyruvyl group from chorismate, with concomitant aromatization of the ring, to provide 4-hydroxybenzoate (4HB) for the ubiquinone pathway. This Psychrobacter arcticus (strain DSM 17307 / VKM B-2377 / 273-4) protein is Probable chorismate pyruvate-lyase.